Consider the following 397-residue polypeptide: MIRYLTSGESHGPALTAIVDGLPAGIDITQNDIDSQLLRRQQGYGRGGRMTIESDKAEVMSGIRFGKSIGSPITLLIRNRDWENWTTTMARFEEPVEEIAKISIPRPGHADLAGRIKYGFNDIRPVIERSSARETAARVAAGSLSRVFLKALGIEIGSYVSAIGSAAEPTVNPAVEELLVNGAECLALEADRSSVRMLNKSAEAGAIAAIDEVKKQGDTLGGIIEIFITGVPMGLGSYVQHDRRLDAMLVSALMSIQAIKGAEIGHAFENSRKPGSQVHDEFFLSENTGLERKTNRAGGLEGSMSSGQTIHLRAAMKPISSLVTPLHSFDLETMKPTLSRFERSDTCAVPAAGVVAEAVVAPVIANALLEKLGGDHFIEIKSRLETYRDHLHRTFKA.

Residues Arg40 and Arg46 each coordinate NADP(+). Residues 129-131 (RSS), 257-258 (QA), Gly302, 317-321 (KPISS), and Arg343 contribute to the FMN site.

It belongs to the chorismate synthase family. As to quaternary structure, homotetramer. It depends on FMNH2 as a cofactor.

The catalysed reaction is 5-O-(1-carboxyvinyl)-3-phosphoshikimate = chorismate + phosphate. Its pathway is metabolic intermediate biosynthesis; chorismate biosynthesis; chorismate from D-erythrose 4-phosphate and phosphoenolpyruvate: step 7/7. In terms of biological role, catalyzes the anti-1,4-elimination of the C-3 phosphate and the C-6 proR hydrogen from 5-enolpyruvylshikimate-3-phosphate (EPSP) to yield chorismate, which is the branch point compound that serves as the starting substrate for the three terminal pathways of aromatic amino acid biosynthesis. This reaction introduces a second double bond into the aromatic ring system. The sequence is that of Chorismate synthase from Chlorobium limicola (strain DSM 245 / NBRC 103803 / 6330).